Here is a 327-residue protein sequence, read N- to C-terminus: Cobalamin biosynthesis protein CobD (327 aa).

4 helical membrane passes run 60–80 (GMWL…VLEL), 82–102 (LPFA…VLLA), 159–179 (DGIV…LFAY), and 304–324 (LFWS…LIGL).

The protein belongs to the CobD/CbiB family.

The protein localises to the cell membrane. It functions in the pathway cofactor biosynthesis; adenosylcobalamin biosynthesis. In terms of biological role, converts cobyric acid to cobinamide by the addition of aminopropanol on the F carboxylic group. This chain is Cobalamin biosynthesis protein CobD, found in Brucella anthropi (strain ATCC 49188 / DSM 6882 / CCUG 24695 / JCM 21032 / LMG 3331 / NBRC 15819 / NCTC 12168 / Alc 37) (Ochrobactrum anthropi).